Here is a 545-residue protein sequence, read N- to C-terminus: Glucans biosynthesis protein G (545 aa).

Positions 1–34 (MVSLLRCQSFKPSSSLICSLALSAAFALSSSAFA) are cleaved as a signal peptide. The interval 38-60 (KPAENKPATPVVSPPKATAQPAN) is disordered.

This sequence belongs to the OpgD/OpgG family.

It localises to the periplasm. The protein operates within glycan metabolism; osmoregulated periplasmic glucan (OPG) biosynthesis. In terms of biological role, involved in the biosynthesis of osmoregulated periplasmic glucans (OPGs). The chain is Glucans biosynthesis protein G from Shewanella sp. (strain MR-4).